A 366-amino-acid chain; its full sequence is tRNA/tmRNA (uracil-C(5))-methyltransferase (366 aa).

S-adenosyl-L-methionine is bound by residues glutamine 190, tyrosine 218, asparagine 223, glutamate 239, and aspartate 299. Residue cysteine 324 is the Nucleophile of the active site. The Proton acceptor role is filled by glutamate 358.

The protein belongs to the class I-like SAM-binding methyltransferase superfamily. RNA M5U methyltransferase family. TrmA subfamily.

It carries out the reaction uridine(54) in tRNA + S-adenosyl-L-methionine = 5-methyluridine(54) in tRNA + S-adenosyl-L-homocysteine + H(+). It catalyses the reaction uridine(341) in tmRNA + S-adenosyl-L-methionine = 5-methyluridine(341) in tmRNA + S-adenosyl-L-homocysteine + H(+). In terms of biological role, dual-specificity methyltransferase that catalyzes the formation of 5-methyluridine at position 54 (m5U54) in all tRNAs, and that of position 341 (m5U341) in tmRNA (transfer-mRNA). The polypeptide is tRNA/tmRNA (uracil-C(5))-methyltransferase (Salmonella heidelberg (strain SL476)).